The following is a 66-amino-acid chain: Stress-associated endoplasmic reticulum protein 1 (66 aa).

The tract at residues 1 to 31 is disordered; that stretch reads MVAKQRIRMANEKHSKNITQRGNVAKTSRNA. The span at 17 to 30 shows a compositional bias: polar residues; it reads NITQRGNVAKTSRN. The helical transmembrane segment at 39-59 threads the bilayer; sequence GPWLLALFIFVVCGSAIFQII.

Belongs to the RAMP4 family. Interacts with SEC61B, SEC61A1 and the SEC61 complex. Interacts with CANX.

It is found in the membrane. It localises to the endoplasmic reticulum membrane. Interacts with target proteins during their translocation into the lumen of the endoplasmic reticulum. Protects unfolded target proteins against degradation during ER stress. May facilitate glycosylation of target proteins after termination of ER stress. May modulate the use of N-glycosylation sites on target proteins. In Bos taurus (Bovine), this protein is Stress-associated endoplasmic reticulum protein 1 (SERP1).